Reading from the N-terminus, the 456-residue chain is Argininosuccinate lyase (456 aa).

Belongs to the lyase 1 family. Argininosuccinate lyase subfamily.

It is found in the cytoplasm. The enzyme catalyses 2-(N(omega)-L-arginino)succinate = fumarate + L-arginine. Its pathway is amino-acid biosynthesis; L-arginine biosynthesis; L-arginine from L-ornithine and carbamoyl phosphate: step 3/3. The sequence is that of Argininosuccinate lyase from Listeria innocua serovar 6a (strain ATCC BAA-680 / CLIP 11262).